Reading from the N-terminus, the 779-residue chain is Phosphoribosylformylglycinamidine synthase subunit PurL (779 aa).

Histidine 52 is a catalytic residue. ATP contacts are provided by tyrosine 55 and lysine 94. Glutamate 96 contacts Mg(2+). Substrate is bound by residues serine 97 to histidine 100 and arginine 119. Catalysis depends on histidine 98, which acts as the Proton acceptor. Aspartate 120 serves as a coordination point for Mg(2+). Glutamine 243 contacts substrate. Aspartate 271 lines the Mg(2+) pocket. Glutamate 315–glutamine 317 serves as a coordination point for substrate. ATP is bound by residues asparagine 523 and glycine 560. Asparagine 561 lines the Mg(2+) pocket. Substrate is bound at residue serine 563.

This sequence belongs to the FGAMS family. In terms of assembly, monomer. Part of the FGAM synthase complex composed of 1 PurL, 1 PurQ and 2 PurS subunits.

The protein localises to the cytoplasm. It carries out the reaction N(2)-formyl-N(1)-(5-phospho-beta-D-ribosyl)glycinamide + L-glutamine + ATP + H2O = 2-formamido-N(1)-(5-O-phospho-beta-D-ribosyl)acetamidine + L-glutamate + ADP + phosphate + H(+). Its pathway is purine metabolism; IMP biosynthesis via de novo pathway; 5-amino-1-(5-phospho-D-ribosyl)imidazole from N(2)-formyl-N(1)-(5-phospho-D-ribosyl)glycinamide: step 1/2. In terms of biological role, part of the phosphoribosylformylglycinamidine synthase complex involved in the purines biosynthetic pathway. Catalyzes the ATP-dependent conversion of formylglycinamide ribonucleotide (FGAR) and glutamine to yield formylglycinamidine ribonucleotide (FGAM) and glutamate. The FGAM synthase complex is composed of three subunits. PurQ produces an ammonia molecule by converting glutamine to glutamate. PurL transfers the ammonia molecule to FGAR to form FGAM in an ATP-dependent manner. PurS interacts with PurQ and PurL and is thought to assist in the transfer of the ammonia molecule from PurQ to PurL. The protein is Phosphoribosylformylglycinamidine synthase subunit PurL of Prochlorococcus marinus subsp. pastoris (strain CCMP1986 / NIES-2087 / MED4).